A 234-amino-acid polypeptide reads, in one-letter code: 1-(5-phosphoribosyl)-5-[(5-phosphoribosylamino)methylideneamino] imidazole-4-carboxamide isomerase (234 aa).

The active-site Proton acceptor is the aspartate 9. Aspartate 131 serves as the catalytic Proton donor.

This sequence belongs to the HisA/HisF family.

It localises to the cytoplasm. It catalyses the reaction 1-(5-phospho-beta-D-ribosyl)-5-[(5-phospho-beta-D-ribosylamino)methylideneamino]imidazole-4-carboxamide = 5-[(5-phospho-1-deoxy-D-ribulos-1-ylimino)methylamino]-1-(5-phospho-beta-D-ribosyl)imidazole-4-carboxamide. It participates in amino-acid biosynthesis; L-histidine biosynthesis; L-histidine from 5-phospho-alpha-D-ribose 1-diphosphate: step 4/9. The protein is 1-(5-phosphoribosyl)-5-[(5-phosphoribosylamino)methylideneamino] imidazole-4-carboxamide isomerase of Staphylococcus epidermidis (strain ATCC 12228 / FDA PCI 1200).